We begin with the raw amino-acid sequence, 1058 residues long: Vacuolar protein sorting-associated protein 54 (1058 aa).

Positions 369–389 form a coiled coil; that stretch reads SKKIVEVHERYEQKKKLLAKL.

This sequence belongs to the VPS54 family. As to quaternary structure, component of the Golgi-associated retrograde protein (GARP) complex, also called VFT (VPS fifty-three) complex, composed of vps-51, vps-52, vps-53 and vps-54. Within the complex interacts with vps-52 and vps-53.

It localises to the golgi apparatus. It is found in the trans-Golgi network. In terms of biological role, acts as a component of the GARP complex that is involved in retrograde transport from early and late endosomes to the trans-Golgi network (TGN). The GARP complex facilitates tethering as well as SNARE complex assembly at the Golgi. In Caenorhabditis elegans, this protein is Vacuolar protein sorting-associated protein 54.